Reading from the N-terminus, the 251-residue chain is NADPH-dependent oxidoreductase (251 aa).

It belongs to the flavin oxidoreductase frp family. Requires FMN as cofactor.

Its function is as follows. Reduces FMN, organic nitro compounds and disulfide DTNB. Involved in maintenance of the cellular redox state and the disulfide stress response. This Staphylococcus saprophyticus subsp. saprophyticus (strain ATCC 15305 / DSM 20229 / NCIMB 8711 / NCTC 7292 / S-41) protein is NADPH-dependent oxidoreductase (nfrA).